Reading from the N-terminus, the 635-residue chain is Voltage-gated potassium channel KCNC4 (635 aa).

Residues 1 to 24 are disordered; it reads MISSVCVSSYRGRKSGNKPPSKTC. The segment at 1–28 is inactivation gate; the sequence is MISSVCVSSYRGRKSGNKPPSKTCLKEE. Residues 1-226 are Cytoplasmic-facing; it reads MISSVCVSSY…EDPYSSRAAR (226 aa). S8, S9, S15, and S21 each carry phosphoserine. The Zn(2+) site is built by H116, C122, C143, and C144. The segment at 160–180 is disordered; the sequence is IFESPDGGGSGAGPSDEAGDD. The chain crosses the membrane as a helical span at residues 227-247; the sequence is VVAFASLFFILVSITTFCLET. N-linked (GlcNAc...) asparagine glycosylation is found at N256 and N265. Residues 278 to 298 form a helical membrane-spanning segment; that stretch reads EPILTYIEGVCVLWFTLEFLV. At 299-312 the chain is on the cytoplasmic side; sequence RIVCCPDTLDFVKN. The helical transmembrane segment at 313–333 threads the bilayer; the sequence is LLNIIDFVAILPFYLEVGLSG. A helical; Voltage-sensor transmembrane segment spans residues 345 to 364; it reads FLRVVRFVRILRIFKLTRHF. Topologically, residues 365-380 are cytoplasmic; it reads VGLRVLGHTLRASTNE. A helical membrane pass occupies residues 381-401; it reads FLLLIIFLALGVLIFATMIYY. K(+) contacts are provided by T436, L437, G438, and Y439. Positions 436–441 match the Selectivity filter motif; the sequence is TLGYGD. Residues 452 to 472 traverse the membrane as a helical segment; the sequence is VGALCALAGVLTIAMPVPVIV. The Cytoplasmic portion of the chain corresponds to 473 to 635; that stretch reads NNFGMYYSLA…PTAGTLFLPH (163 aa). Positions 490–580 are disordered; that stretch reads KKRKKHVPRP…RRALRRSTTR (91 aa). Basic and acidic residues predominate over residues 527 to 542; the sequence is AREEGMIERKRADSKQ.

It belongs to the potassium channel family. C (Shaw) (TC 1.A.1.2) subfamily. Kv3.4/KCNC4 sub-subfamily. In terms of assembly, homotetramer. Heterotetramer of potassium channel proteins. Phosphorylation of serine residues in the inactivation gate inhibits rapid channel closure.

The protein resides in the membrane. The enzyme catalyses K(+)(in) = K(+)(out). Functionally, voltage-gated potassium channel that opens in response to the voltage difference across the membrane, forming a potassium-selective channel through which potassium ions pass in accordance with their electrochemical gradient. The channel displays rapid activation and inactivation kinetics. This Homo sapiens (Human) protein is Voltage-gated potassium channel KCNC4.